The chain runs to 247 residues: UDP-2,3-diacylglucosamine hydrolase (247 aa).

Positions 8, 10, 41, 79, and 114 each coordinate Mn(2+). Residue 79–80 (NR) participates in substrate binding. Residues D122, S160, D171, R174, and H202 each coordinate substrate. Residues H202 and H204 each coordinate Mn(2+).

Belongs to the LpxH family. The cofactor is Mn(2+).

It is found in the cell inner membrane. It catalyses the reaction UDP-2-N,3-O-bis[(3R)-3-hydroxytetradecanoyl]-alpha-D-glucosamine + H2O = 2-N,3-O-bis[(3R)-3-hydroxytetradecanoyl]-alpha-D-glucosaminyl 1-phosphate + UMP + 2 H(+). It functions in the pathway glycolipid biosynthesis; lipid IV(A) biosynthesis; lipid IV(A) from (3R)-3-hydroxytetradecanoyl-[acyl-carrier-protein] and UDP-N-acetyl-alpha-D-glucosamine: step 4/6. Hydrolyzes the pyrophosphate bond of UDP-2,3-diacylglucosamine to yield 2,3-diacylglucosamine 1-phosphate (lipid X) and UMP by catalyzing the attack of water at the alpha-P atom. Involved in the biosynthesis of lipid A, a phosphorylated glycolipid that anchors the lipopolysaccharide to the outer membrane of the cell. The polypeptide is UDP-2,3-diacylglucosamine hydrolase (Xanthomonas axonopodis pv. citri (strain 306)).